Consider the following 880-residue polypeptide: DNA mismatch repair protein MutS (880 aa).

Residue 631 to 638 coordinates ATP; sequence GPNMAGKS. Residues 835–860 form a disordered region; sequence RAAPPPPAPAAPKTSPVEERLREIQP. Over residues 850 to 860 the composition is skewed to basic and acidic residues; sequence PVEERLREIQP.

The protein belongs to the DNA mismatch repair MutS family.

Its function is as follows. This protein is involved in the repair of mismatches in DNA. It is possible that it carries out the mismatch recognition step. This protein has a weak ATPase activity. The polypeptide is DNA mismatch repair protein MutS (Cereibacter sphaeroides (strain ATCC 17029 / ATH 2.4.9) (Rhodobacter sphaeroides)).